An 835-amino-acid chain; its full sequence is Pre-mRNA-processing protein 40C (835 aa).

Positions 1-20 are enriched in polar residues; that stretch reads MEGENTTDPPYTTAASSGQS. A disordered region spans residues 1–22; that stretch reads MEGENTTDPPYTTAASSGQSIF. 2 WW domains span residues 243–276 and 295–328; these read GNRLDAWTAHKSEAGVLYYYNSVTGQSTYEKPPG and SLPGTDWALVSTNDGKKYYYNNKTKVSSWQIPAE. The disordered stretch occupies residues 397–459; the sequence is SGMPVSSTIT…DSGPSKEECS (63 aa). Residues 400-428 are compositionally biased toward polar residues; sequence PVSSTITSEANSGKTTEVTPSGESGNSTG. FF domains are found at residues 455-509, 519-577, and 590-643; these read KEEC…YVKT, RAAH…RVLS, and RAAA…YIAE. Disordered stretches follow at residues 649 to 677 and 714 to 738; these read RGDDHEMKARDEEDKLRERERELRKRKER and TESKPILERDPQKRASNPDLEPADK. 2 consecutive FF domains span residues 691-748 and 750-815; these read RKEA…HVKS and YERC…YVED.

It belongs to the PRPF40 family. Interacts (via the WW domains) with the phosphorylated C-terminal domain of NRPB1 (via CTD domain). Expressed in roots, shoots, rosette leaves, cauline leaves, stems and flowers.

It is found in the nucleus. Binds the phosphorylated C-terminal domain (CTD) of the largest subunit of RNA polymerase II and functions as a scaffold for RNA processing machineries. May be involved in pre-mRNA splicing. The polypeptide is Pre-mRNA-processing protein 40C (Arabidopsis thaliana (Mouse-ear cress)).